A 125-amino-acid chain; its full sequence is Putative oxygen-evolving enhancer protein 2-2 (125 aa).

Serine 15 is subject to Phosphoserine.

The protein belongs to the PsbP family.

This chain is Putative oxygen-evolving enhancer protein 2-2 (PSBP2), found in Arabidopsis thaliana (Mouse-ear cress).